A 678-amino-acid polypeptide reads, in one-letter code: Auxin response factor 7 (678 aa).

The segment at residues 128-230 (FCKTLTASDT…ELRVGVRRLM (103 aa)) is a DNA-binding region (TF-B3). 2 disordered regions span residues 360 to 386 (AVSN…NSIA) and 502 to 547 (GVGQ…SRQV). The region spanning 548–641 (RSCTKVIMQG…EAKQLTPKSK (94 aa)) is the PB1 domain. Positions 643–678 (PIIGDAIKPNPNKQSPESDMPHSDLDSTAPVTDKDC) are disordered.

This sequence belongs to the ARF family. In terms of assembly, homodimers and heterodimers. As to expression, expressed in roots, culms, leaves and young panicles.

Its subcellular location is the nucleus. Auxin response factors (ARFs) are transcriptional factors that bind specifically to the DNA sequence 5'-TGTCTC-3' found in the auxin-responsive promoter elements (AuxREs). The polypeptide is Auxin response factor 7 (ARF7) (Oryza sativa subsp. japonica (Rice)).